The primary structure comprises 270 residues: NAD(P)H-hydrate epimerase (270 aa).

A YjeF N-terminal domain is found at 25 to 234 (FQQLMDLMQN…DLLAPEAIYQ (210 aa)). 73–77 (DNGGQ) contributes to the (6S)-NADPHX binding site. The K(+) site is built by Asn-74 and Asp-144. (6S)-NADPHX-binding positions include 148-154 (GVGLYGH) and Glu-177. Position 180 (Thr-180) interacts with K(+).

The protein belongs to the NnrE/AIBP family. K(+) is required as a cofactor.

It carries out the reaction (6R)-NADHX = (6S)-NADHX. It catalyses the reaction (6R)-NADPHX = (6S)-NADPHX. Catalyzes the epimerization of the S- and R-forms of NAD(P)HX, a damaged form of NAD(P)H that is a result of enzymatic or heat-dependent hydration. This is a prerequisite for the S-specific NAD(P)H-hydrate dehydratase to allow the repair of both epimers of NAD(P)HX. In Legionella pneumophila (strain Corby), this protein is NAD(P)H-hydrate epimerase.